The primary structure comprises 137 residues: Aspartate 1-decarboxylase (137 aa).

Ser25 serves as the catalytic Schiff-base intermediate with substrate; via pyruvic acid. Ser25 carries the pyruvic acid (Ser) modification. Position 57 (Thr57) interacts with substrate. Residue Tyr58 is the Proton donor of the active site. A substrate-binding site is contributed by 73–75; the sequence is GAA.

It belongs to the PanD family. In terms of assembly, heterooctamer of four alpha and four beta subunits. Requires pyruvate as cofactor. Is synthesized initially as an inactive proenzyme, which is activated by self-cleavage at a specific serine bond to produce a beta-subunit with a hydroxyl group at its C-terminus and an alpha-subunit with a pyruvoyl group at its N-terminus.

The protein resides in the cytoplasm. The catalysed reaction is L-aspartate + H(+) = beta-alanine + CO2. Its pathway is cofactor biosynthesis; (R)-pantothenate biosynthesis; beta-alanine from L-aspartate: step 1/1. Functionally, catalyzes the pyruvoyl-dependent decarboxylation of aspartate to produce beta-alanine. The protein is Aspartate 1-decarboxylase of Thermobifida fusca (strain YX).